The chain runs to 213 residues: GTP-binding protein yptV4 (213 aa).

13–21 (GDTGVGKSC) serves as a coordination point for GTP. Residues 35–43 (HDLTIGVEF) carry the Effector region motif. GTP-binding positions include 61-65 (DTAGQ), 119-122 (NKCD), and 149-151 (SAR). The tract at residues 194 to 213 (AGPQAAKPGEGDARKSSSCC) is disordered. Positions 202-213 (GEGDARKSSSCC) are enriched in basic and acidic residues. Residues Cys-212 and Cys-213 are each lipidated (S-geranylgeranyl cysteine).

This sequence belongs to the small GTPase superfamily. Rab family.

The protein localises to the cell membrane. Protein transport. Probably involved in vesicular traffic. This Volvox carteri (Green alga) protein is GTP-binding protein yptV4 (YPTV4).